Here is a 240-residue protein sequence, read N- to C-terminus: Protein GrpE (240 aa).

Disordered stretches follow at residues 1-54 and 206-240; these read MSGD…NEAR and VSMG…DGNG. Residues 215–233 are compositionally biased toward low complexity; it reads GASSQPAEAPAADAPAEDS.

This sequence belongs to the GrpE family. As to quaternary structure, homodimer.

It is found in the cytoplasm. In terms of biological role, participates actively in the response to hyperosmotic and heat shock by preventing the aggregation of stress-denatured proteins, in association with DnaK and GrpE. It is the nucleotide exchange factor for DnaK and may function as a thermosensor. Unfolded proteins bind initially to DnaJ; upon interaction with the DnaJ-bound protein, DnaK hydrolyzes its bound ATP, resulting in the formation of a stable complex. GrpE releases ADP from DnaK; ATP binding to DnaK triggers the release of the substrate protein, thus completing the reaction cycle. Several rounds of ATP-dependent interactions between DnaJ, DnaK and GrpE are required for fully efficient folding. This Synechococcus sp. (strain WH7803) protein is Protein GrpE.